Consider the following 102-residue polypeptide: Pole-localizer protein TmaR (102 aa).

The stretch at 7 to 34 (IINQARRKNKLKRELQDNQKKIRDNQKR) forms a coiled coil.

This sequence belongs to the pole-localizer TmaR family.

It is found in the cytoplasm. In terms of biological role, pole-localizer protein involved in the regulation of several cellular processes. This is Pole-localizer protein TmaR from Aliivibrio salmonicida (strain LFI1238) (Vibrio salmonicida (strain LFI1238)).